Here is a 98-residue protein sequence, read N- to C-terminus: Large ribosomal subunit protein uL23 (98 aa).

The protein belongs to the universal ribosomal protein uL23 family. As to quaternary structure, part of the 50S ribosomal subunit. Contacts protein L29, and trigger factor when it is bound to the ribosome.

Functionally, one of the early assembly proteins it binds 23S rRNA. One of the proteins that surrounds the polypeptide exit tunnel on the outside of the ribosome. Forms the main docking site for trigger factor binding to the ribosome. The protein is Large ribosomal subunit protein uL23 of Herpetosiphon aurantiacus (strain ATCC 23779 / DSM 785 / 114-95).